A 431-amino-acid chain; its full sequence is MANSC domain-containing protein 1 (431 aa).

An N-terminal signal peptide occupies residues 1–26 (MFFGGKGSLTYTLVIICFLTLRLAAS). Topologically, residues 27-385 (QNCLNKSLED…QYGLPFEKWL (359 aa)) are extracellular. N-linked (GlcNAc...) asparagine glycosylation occurs at N31. An MANSC domain is found at 33–117 (SLEDVVIDIQ…LKPAKGLRSY (85 aa)). N-linked (GlcNAc...) asparagine glycans are attached at residues N222 and N251. The tract at residues 236–279 (HTTSATPKPAIRLPTNASVTPSGTSQPQLATTSPPVTTVTSQPP) is disordered. Over residues 250–265 (TNASVTPSGTSQPQLA) the composition is skewed to polar residues. The segment covering 266–279 (TTSPPVTTVTSQPP) has biased composition (low complexity). 2 N-linked (GlcNAc...) asparagine glycosylation sites follow: N327 and N352. A disordered region spans residues 352–372 (NKTASWEGREASPGRSSQGNV). A helical transmembrane segment spans residues 386–408 (LIGSLLFGVLFLVIGLVLLGRIL). Residues 409–431 (SESLRRKRYSRLDYLINGIYVDI) are Cytoplasmic-facing.

The protein resides in the membrane. The polypeptide is MANSC domain-containing protein 1 (MANSC1) (Macaca fascicularis (Crab-eating macaque)).